A 249-amino-acid chain; its full sequence is Type I iodothyronine deiodinase (249 aa).

At 1 to 12 (MGLPQPGLWLKR) the chain is on the extracellular side. A helical; Signal-anchor for type III membrane protein transmembrane segment spans residues 13–33 (LWVLLEVAVHVVVGKVLLILF). The Cytoplasmic portion of the chain corresponds to 34-249 (PDRVKRNILA…VRAVLEKLHS (216 aa)). Selenocysteine 126 is an active-site residue. A non-standard amino acid (selenocysteine) is located at residue selenocysteine 126.

Belongs to the iodothyronine deiodinase family. As to quaternary structure, predominantly monomer. Can form homodimers but homodimerization is not essential for enzyme activity.

The protein localises to the cell membrane. The protein resides in the endoplasmic reticulum membrane. Its subcellular location is the basolateral cell membrane. It carries out the reaction 3,3',5-triiodo-L-thyronine + iodide + A + H(+) = L-thyroxine + AH2. It catalyses the reaction 3,3',5'-triiodo-L-thyronine + iodide + A + H(+) = L-thyroxine + AH2. The catalysed reaction is 3,3'-diiodo-L-thyronine + iodide + A + H(+) = 3,3',5'-triiodo-L-thyronine + AH2. The enzyme catalyses 3,3'-diiodo-L-thyronine + iodide + A + H(+) = 3,3',5-triiodo-L-thyronine + AH2. It carries out the reaction 3'-iodo-L-thyronine + iodide + A + H(+) = 3',5'-diiodo-L-thyronine + AH2. It catalyses the reaction 3-iodo-L-thyronine + iodide + A + H(+) = 3,5-diiodo-L-thyronine + AH2. The catalysed reaction is 3-iodo-L-thyronine + iodide + A + H(+) = 3,3'-diiodo-L-thyronine + AH2. The enzyme catalyses 3,3'-diiodothyronamine + iodide + A + H(+) = 3,3',5'-triiodothyronamine + AH2. It carries out the reaction 3'-iodothyronamine + iodide + A + H(+) = 3',5'-diiodothyronamine + AH2. It catalyses the reaction 3-iodothyronamine + iodide + A + H(+) = 3,3'-diiodothyronamine + AH2. The catalysed reaction is 3,3'-diiodothyronamine + iodide + A + H(+) = 3,3',5-triiodothyronamine + AH2. The enzyme catalyses 3-iodothyronamine + iodide + A + H(+) = 3,5-diiodothyronamine + AH2. It carries out the reaction 3,3'-diiodo-L-thyronine sulfate + iodide + A + H(+) = 3,3',5'-triiodo-L-thyronine sulfate + AH2. It catalyses the reaction 3,3',5'-triiodo-L-thyronine sulfate + iodide + A + H(+) = L-thyroxine sulfate + AH2. The catalysed reaction is 3,3'-diiodo-L-thyronine sulfate + iodide + A + H(+) = 3,3',5-triiodo-L-thyronine sulfate + AH2. Its activity is regulated as follows. Deiodination of substrates 3,3',5'-triiodothyronine, 3,3',5'-triiodothyronamine and 3',5'- diiodothyronamine are inhibited by 6n-propyl-2-thiouracil (PTU). In terms of biological role, plays a crucial role in the metabolism of thyroid hormones (TH) and has specific roles in TH activation and inactivation by deiodination. Catalyzes the deiodination of L-thyroxine (T4) to 3,5,3'-triiodothyronine (T3), 3,3',5'-triiodothyronine (rT3) to 3,3'-diiodothyronine (3,3'-T2) and 3',5'-diiodothyronine (3',5'-T2) to 3'-monoiodothyronine (3'-T1) via outer-ring deiodination (ORD). Catalyzes the deiodination of T4 to 3,3',5'-triiodothyronine (rT3) via inner-ring deiodination (IRD). Catalyzes the deiodination of T3 to 3,3'-T2, 3,5-diiodothyronine (3,5-T2) to 3- monoiodothyronine (3-T1) and 3,3'-T2 to 3-T1 via IRD. Catalyzes the phenolic ring deiodinations of 3,3',5'-triiodothyronamine and 3',5'-diiodothyronamine. Catalyzes the phenolic ring deiodination of 3,3'-diiodothyronamine and tyrosyl ring deiodinations of 3,5,3'-triiodothyronamine and 3,5-diiodothyronamine. Catalyzes the deiodination of L-thyroxine sulfate and 3,3',5-triiodo-L-thyronine sulfate via IRD and of 3,3',5'-triiodo-L-thyronine sulfate via ORD. This chain is Type I iodothyronine deiodinase (DIO1), found in Homo sapiens (Human).